A 439-amino-acid polypeptide reads, in one-letter code: Ribosomal protein uS12 methylthiotransferase RimO (439 aa).

The MTTase N-terminal domain occupies 5-115 (PKIGFVSLGC…LIEAVHTHAP (111 aa)). The [4Fe-4S] cluster site is built by Cys-14, Cys-50, Cys-79, Cys-146, Cys-150, and Cys-153. The Radical SAM core domain maps to 132–369 (LTPRHYSYLK…MGLQAQISTD (238 aa)). Residues 372 to 439 (QRFVGTEQQV…ESTEYDLIAD (68 aa)) form the TRAM domain.

This sequence belongs to the methylthiotransferase family. RimO subfamily. It depends on [4Fe-4S] cluster as a cofactor.

Its subcellular location is the cytoplasm. The enzyme catalyses L-aspartate(89)-[ribosomal protein uS12]-hydrogen + (sulfur carrier)-SH + AH2 + 2 S-adenosyl-L-methionine = 3-methylsulfanyl-L-aspartate(89)-[ribosomal protein uS12]-hydrogen + (sulfur carrier)-H + 5'-deoxyadenosine + L-methionine + A + S-adenosyl-L-homocysteine + 2 H(+). Catalyzes the methylthiolation of an aspartic acid residue of ribosomal protein uS12. The protein is Ribosomal protein uS12 methylthiotransferase RimO of Francisella tularensis subsp. novicida (strain U112).